Consider the following 139-residue polypeptide: Phosphoribosyl-AMP cyclohydrolase (139 aa).

Mg(2+) is bound at residue aspartate 92. Cysteine 93 is a Zn(2+) binding site. Mg(2+) is bound by residues aspartate 94 and aspartate 96. Residues cysteine 111 and cysteine 118 each coordinate Zn(2+).

The protein belongs to the PRA-CH family. In terms of assembly, homodimer. It depends on Mg(2+) as a cofactor. Requires Zn(2+) as cofactor.

Its subcellular location is the cytoplasm. The catalysed reaction is 1-(5-phospho-beta-D-ribosyl)-5'-AMP + H2O = 1-(5-phospho-beta-D-ribosyl)-5-[(5-phospho-beta-D-ribosylamino)methylideneamino]imidazole-4-carboxamide. The protein operates within amino-acid biosynthesis; L-histidine biosynthesis; L-histidine from 5-phospho-alpha-D-ribose 1-diphosphate: step 3/9. Functionally, catalyzes the hydrolysis of the adenine ring of phosphoribosyl-AMP. This chain is Phosphoribosyl-AMP cyclohydrolase, found in Caulobacter vibrioides (strain ATCC 19089 / CIP 103742 / CB 15) (Caulobacter crescentus).